A 68-amino-acid chain; its full sequence is Large ribosomal subunit protein bL33c (68 aa).

The protein belongs to the bacterial ribosomal protein bL33 family.

It localises to the plastid. It is found in the chloroplast. The sequence is that of Large ribosomal subunit protein bL33c from Nymphaea alba (White water-lily).